Here is a 290-residue protein sequence, read N- to C-terminus: Sodium/potassium-transporting ATPase subunit beta-2 (290 aa).

Topologically, residues 1-39 (MVIQKEKKSCGQVVEEWKEFVWNPRTHQFMGRTGTSWAF) are cytoplasmic. A helical; Signal-anchor for type II membrane protein membrane pass occupies residues 40-67 (ILLFYLVFYGFLTAMFTLTMWVMLQTVS). Residues 68–290 (DHTPKYQDRL…VAFKLRINKT (223 aa)) are Extracellular-facing. N-linked (GlcNAc...) asparagine glycosylation is found at Asn96 and Asn118. Residues Cys129 and Cys150 are joined by a disulfide bond. An N-linked (GlcNAc...) asparagine glycan is attached at Asn153. Cys160 and Cys177 are disulfide-bonded. N-linked (GlcNAc...) asparagine glycosylation is found at Asn193, Asn197, and Asn238. The segment at 193–289 (NQSMNVTCVG…RVAFKLRINK (97 aa)) is immunoglobulin-like. Cys200 and Cys261 are disulfide-bonded.

Belongs to the X(+)/potassium ATPases subunit beta family. The sodium/potassium-transporting ATPase is composed of a catalytic alpha subunit, an auxiliary non-catalytic beta subunit and an additional regulatory subunit. Interacts with BSG.

The protein localises to the cell membrane. In terms of biological role, this is the non-catalytic component of the active enzyme, which catalyzes the hydrolysis of ATP coupled with the exchange of Na(+) and K(+) ions across the plasma membrane. The exact function of the beta-2 subunit is not known. Mediates cell adhesion of neurons and astrocytes, and promotes neurite outgrowth. This chain is Sodium/potassium-transporting ATPase subunit beta-2 (ATP1B2), found in Bos taurus (Bovine).